Consider the following 640-residue polypeptide: Ribonuclease J (640 aa).

Zn(2+) is bound by residues His75, His77, Asp79, His80, His145, and Asp167. 368-372 serves as a coordination point for substrate; it reads HVSGH. Zn(2+) is bound at residue His394. The tract at residues 578-640 is disordered; the sequence is TVSATSATPA…RKRSTTSVSS (63 aa). The span at 598–610 shows a compositional bias: basic and acidic residues; sequence PEPKVKAKPEKKV.

It belongs to the metallo-beta-lactamase superfamily. RNA-metabolizing metallo-beta-lactamase-like family. Bacterial RNase J subfamily. Homodimer, may be a subunit of the RNA degradosome. Zn(2+) is required as a cofactor.

The protein resides in the cytoplasm. Functionally, an RNase that has 5'-3' exonuclease and possibly endoonuclease activity. Involved in maturation of rRNA and in some organisms also mRNA maturation and/or decay. This Synechocystis sp. (strain ATCC 27184 / PCC 6803 / Kazusa) protein is Ribonuclease J.